We begin with the raw amino-acid sequence, 168 residues long: Phosphopantetheine adenylyltransferase (168 aa).

Thr-14 is a substrate binding site. Residues 14-15 and His-22 contribute to the ATP site; that span reads TF. Substrate is bound by residues Lys-46, Leu-78, and Arg-92. ATP-binding positions include 93-95, Glu-103, and 128-134; these read GLR and YSFISSS.

Belongs to the bacterial CoaD family. In terms of assembly, homohexamer. It depends on Mg(2+) as a cofactor.

The protein localises to the cytoplasm. The catalysed reaction is (R)-4'-phosphopantetheine + ATP + H(+) = 3'-dephospho-CoA + diphosphate. It functions in the pathway cofactor biosynthesis; coenzyme A biosynthesis; CoA from (R)-pantothenate: step 4/5. Reversibly transfers an adenylyl group from ATP to 4'-phosphopantetheine, yielding dephospho-CoA (dPCoA) and pyrophosphate. In Xanthomonas campestris pv. campestris (strain 8004), this protein is Phosphopantetheine adenylyltransferase.